The chain runs to 161 residues: Large ribosomal subunit protein uL11 (161 aa).

This sequence belongs to the universal ribosomal protein uL11 family. In terms of assembly, part of the ribosomal stalk of the 50S ribosomal subunit. Interacts with L10 and the large rRNA to form the base of the stalk. L10 forms an elongated spine to which L12 dimers bind in a sequential fashion forming a multimeric L10(L12)X complex.

Functionally, forms part of the ribosomal stalk which helps the ribosome interact with GTP-bound translation factors. This Methanosarcina mazei (strain ATCC BAA-159 / DSM 3647 / Goe1 / Go1 / JCM 11833 / OCM 88) (Methanosarcina frisia) protein is Large ribosomal subunit protein uL11.